Reading from the N-terminus, the 188-residue chain is Inosine triphosphate pyrophosphatase (188 aa).

11 to 16 (TGNKHK) contacts ITP. Glu-39 contributes to the Mg(2+) binding site. ITP contacts are provided by residues Lys-51, 67-68 (DT), Lys-84, 143-146 (FGWN), and 171-172 (HR).

The protein belongs to the HAM1 NTPase family. Homodimer. Mg(2+) is required as a cofactor. The cofactor is Mn(2+).

The protein resides in the cytoplasm. Its subcellular location is the nucleus. It carries out the reaction ITP + H2O = IMP + diphosphate + H(+). The catalysed reaction is dITP + H2O = dIMP + diphosphate + H(+). The enzyme catalyses XTP + H2O = XMP + diphosphate + H(+). Pyrophosphatase that hydrolyzes non-canonical purine nucleotides such as inosine triphosphate (ITP), deoxyinosine triphosphate (dITP) or xanthosine 5'-triphosphate (XTP) to their respective monophosphate derivatives. The enzyme does not distinguish between the deoxy- and ribose forms. Probably excludes non-canonical purines from RNA and DNA precursor pools, thus preventing their incorporation into RNA and DNA and avoiding chromosomal lesions. This chain is Inosine triphosphate pyrophosphatase, found in Schizosaccharomyces pombe (strain 972 / ATCC 24843) (Fission yeast).